A 356-amino-acid chain; its full sequence is Probable arabinogalactan endo-beta-1,4-galactanase A (356 aa).

The signal sequence occupies residues 1 to 21; the sequence is MLGKMILLPLFVLLCHSLASA. Asparagine 133 carries an N-linked (GlcNAc...) asparagine glycan. Glutamate 157 functions as the Proton donor in the catalytic mechanism. The Nucleophile role is filled by glutamate 268.

The protein belongs to the glycosyl hydrolase 53 family.

It is found in the secreted. It catalyses the reaction The enzyme specifically hydrolyzes (1-&gt;4)-beta-D-galactosidic linkages in type I arabinogalactans.. Functionally, endogalactanase involved in the degradation of plant cell wall polysaccharides, and more particularly of hairy regions of pectin. The polypeptide is Probable arabinogalactan endo-beta-1,4-galactanase A (galA) (Neosartorya fischeri (strain ATCC 1020 / DSM 3700 / CBS 544.65 / FGSC A1164 / JCM 1740 / NRRL 181 / WB 181) (Aspergillus fischerianus)).